The chain runs to 467 residues: Glutamate--tRNA ligase (467 aa).

Residues 10 to 20 carry the 'HIGH' region motif; sequence PSPTGYLHVGG. 4 residues coordinate Zn(2+): Cys-99, Cys-101, Cys-126, and Glu-128. The short motif at 237 to 241 is the 'KMSKS' region element; the sequence is RLSKR. Position 240 (Lys-240) interacts with ATP.

This sequence belongs to the class-I aminoacyl-tRNA synthetase family. Glutamate--tRNA ligase type 1 subfamily. Monomer. Zn(2+) is required as a cofactor.

The protein resides in the cytoplasm. The catalysed reaction is tRNA(Glu) + L-glutamate + ATP = L-glutamyl-tRNA(Glu) + AMP + diphosphate. Its function is as follows. Catalyzes the attachment of glutamate to tRNA(Glu) in a two-step reaction: glutamate is first activated by ATP to form Glu-AMP and then transferred to the acceptor end of tRNA(Glu). In Geotalea uraniireducens (strain Rf4) (Geobacter uraniireducens), this protein is Glutamate--tRNA ligase.